Here is a 1512-residue protein sequence, read N- to C-terminus: Bifunctional glutamate/proline--tRNA ligase (1512 aa).

A glutamate--tRNA ligase region spans residues 164–759 (GTKWDVSGNR…SSVLYSRVAV (596 aa)). The short motif at 204-214 (PEASGYLHIGH) is the 'HIGH' region element. A disordered region spans residues 294–315 (TPAEQMKAEREQRTESKHRKNS). Residues 299–308 (MKAEREQRTE) show a composition bias toward basic and acidic residues. Lys300 is subject to N6-acetyllysine; alternate. An N6-malonyllysine; alternate modification is found at Lys300. A Phosphothreonine modification is found at Thr355. At Lys417 the chain carries N6-acetyllysine. The 'KMSKS' region signature appears at 432–436 (VLSKR). At Ser434 the chain carries Phosphoserine. 4 positions are modified to N6-acetyllysine: Lys498, Lys535, Lys542, and Lys637. Residues 709–736 (EMPTSGSKEKTKVEISKKETSSAPKERP) are compositionally biased toward basic and acidic residues. Residues 709–742 (EMPTSGSKEKTKVEISKKETSSAPKERPAPAVSS) form a disordered region. The WHEP-TRS 1 domain occupies 749–805 (DSSVLYSRVAVQGDVVRELKAKKAPKEDIDAAVKQLLTLKAEYKEKTGQEYKPGNPS). The interval 760–956 (QGDVVRELKA…GIEYKPVSAT (197 aa)) is 3 X 57 AA approximate repeats. Lys788 carries the N6-acetyllysine modification. The disordered stretch occupies residues 795-819 (TGQEYKPGNPSAAAVQTVSTKSSSN). The span at 808–819 (AVQTVSTKSSSN) shows a compositional bias: polar residues. Residues 822 to 878 (ESTSLYNKVAAQGEVVRKLKAEKAPKAKVTEAVECLLSLKAEYKEKTGKDYVPGQPP) enclose the WHEP-TRS 2 domain. An N6-acetyllysine modification is found at Lys861. Disordered regions lie at residues 869–898 (GKDYVPGQPPASQNSHSNPVSNAQPAGAEK) and 956–1011 (TGAE…PKKQ). Phosphotyrosine is present on Tyr872. A compositionally biased stretch (polar residues) spans 878-892 (PASQNSHSNPVSNAQ). Phosphoserine is present on Ser885. One can recognise a WHEP-TRS 3 domain in the interval 900 to 956 (EAKVLFDRVACQGEVVRKLKAEKASKDQVDSAVQELLQLKAQYKSLTGIEYKPVSAT). Residues 958-976 (AEDKDKKKKEKENKSEKQN) are compositionally biased toward basic and acidic residues. Residues 997–1006 (LSSGGAGEGQ) are compositionally biased toward gly residues. Residue Ser998 is modified to Phosphoserine. Ser999 carries the phosphoserine; by RPS6KB1 modification. Residues 1007 to 1512 (GPKKQTRLGL…KFYTLFGRSY (506 aa)) are proline--tRNA ligase. L-proline-binding positions include 1121–1123 (TSE) and Arg1152. 6 residues coordinate ATP: Arg1152, Glu1154, Arg1163, Thr1164, Gln1237, and Thr1240. Residue Arg1152 is modified to Omega-N-methylarginine. Gln1237 contributes to the Mg(2+) binding site. His1242 lines the L-proline pocket. Thr1276 and Arg1278 together coordinate ATP. Ser1350 is subject to Phosphoserine. Zn(2+) is bound by residues Cys1448, Cys1453, Cys1495, and Cys1497. Lys1503 carries the post-translational modification N6-acetyllysine.

This sequence in the N-terminal section; belongs to the class-I aminoacyl-tRNA synthetase family. Glutamate--tRNA ligase type 2 subfamily. It in the C-terminal section; belongs to the class-II aminoacyl-tRNA synthetase family. In terms of assembly, homodimer. Part of the aminoacyl-tRNA synthetase multienzyme complex, also know as multisynthetase complex, that is composed of the tRNA ligases for Arg (RARS1), Asp (DARS1), Gln (QARS1), Ile (IARS1), Leu (LARS1), Lys (KARS1), Met (MARS1) the bifunctional ligase for Glu and Pro (EPRS1) and the auxiliary subunits AIMP1/p43, AIMP2/p38 and EEF1E1/p18. Forms a linear complex that contains MARS1, EEF1E1, EPRS1 and AIMP2 that is at the core of the multisubunit complex. Interacts with TARS3. Interacts with DUS2L. Component of the GAIT complex which is composed of EPRS1, RPL13A and GAPDH. Interacts (phosphorylated at Ser-999) with SLC27A1; mediates the translocation of SLC27A1 from the cytoplasm to the plasma membrane thereby increasing the uptake of long-chain fatty acids. Phosphorylated at Ser-999 by RPS6KB1; triggers EPRS1 release from the aminoacyl-tRNA synthetase multienzyme complex. In monocytes, the IFN-gamma-induced phosphorylation at Ser-999 releases EPRS1 from the aminoacyl-tRNA synthetase multienzyme complex, allowing its association with the GAIT complex. Phosphorylation at Ser-999 is specifically required for the RPL13A-mediated interaction of the GAIT complex with eIF4G. Phosphorylation at Ser-999 by RPS6KB1, is also induced by insulin through activation of the mTORC1 signaling pathway and promotes the interaction of EPRS1 with SLC27A1.

Its subcellular location is the cytoplasm. It localises to the cytosol. It is found in the membrane. The catalysed reaction is tRNA(Glu) + L-glutamate + ATP = L-glutamyl-tRNA(Glu) + AMP + diphosphate. The enzyme catalyses tRNA(Pro) + L-proline + ATP = L-prolyl-tRNA(Pro) + AMP + diphosphate. In terms of biological role, multifunctional protein which primarily functions within the aminoacyl-tRNA synthetase multienzyme complex, also known as multisynthetase complex. Within the complex it catalyzes the attachment of both L-glutamate and L-proline to their cognate tRNAs in a two-step reaction where the amino acid is first activated by ATP to form a covalent intermediate with AMP. Subsequently, the activated amino acid is transferred to the acceptor end of the cognate tRNA to form L-glutamyl-tRNA(Glu) and L-prolyl-tRNA(Pro). Upon interferon-gamma stimulation, EPRS1 undergoes phosphorylation, causing its dissociation from the aminoacyl-tRNA synthetase multienzyme complex. It is recruited to form the GAIT complex, which binds to stem loop-containing GAIT elements found in the 3'-UTR of various inflammatory mRNAs, such as ceruloplasmin. The GAIT complex inhibits the translation of these mRNAs, allowing interferon-gamma to redirect the function of EPRS1 from protein synthesis to translation inhibition in specific cell contexts. Furthermore, it can function as a downstream effector in the mTORC1 signaling pathway, by promoting the translocation of SLC27A1 from the cytoplasm to the plasma membrane where it mediates the uptake of long-chain fatty acid by adipocytes. Thereby, EPRS1 also plays a role in fat metabolism and more indirectly influences lifespan. In Mus musculus (Mouse), this protein is Bifunctional glutamate/proline--tRNA ligase.